A 235-amino-acid polypeptide reads, in one-letter code: uncharacterized protein (235 aa).

This is an uncharacterized protein from Invertebrate iridescent virus 6 (IIV-6).